We begin with the raw amino-acid sequence, 848 residues long: Neprilysin-11 (848 aa).

Over 1 to 74 the chain is Cytoplasmic; sequence MPFGNDPPDY…WWKSRTTMEK (74 aa). A helical; Signal-anchor for type II membrane protein transmembrane segment spans residues 75-95; that stretch reads LLLPVLLLFCLLTAVLLAVII. Residues 96–848 lie on the Extracellular side of the membrane; the sequence is NTDKRIEAMK…VNPDHKCIVW (753 aa). Residues 108 to 161 are disordered; sequence HATQTEHAGFGDPTENPTKTAEDPRVPPIVPEAPTSPEPEVTTSTEKPKEPEVC. The span at 133–144 shows a compositional bias: pro residues; the sequence is VPPIVPEAPTSP. The Peptidase M13 domain occupies 160-848; that stretch reads VCSTPGCVRA…VNPDHKCIVW (689 aa). Residues Cys161 and Cys166 are joined by a disulfide bond. N-linked (GlcNAc...) asparagine glycosylation is found at Asn178, Asn249, Asn284, Asn312, Asn337, Asn364, Asn398, and Asn438. 4 disulfides stabilise this stretch: Cys184–Cys833, Cys192–Cys793, Cys247–Cys509, and Cys719–Cys845. Residue His682 coordinates Zn(2+). Residue Glu683 is part of the active site. Residue His686 participates in Zn(2+) binding. N-linked (GlcNAc...) asparagine glycosylation is present at Asn726. Glu744 contacts Zn(2+). The active-site Proton donor is the Asp748.

The protein belongs to the peptidase M13 family. Zn(2+) is required as a cofactor.

It localises to the cell membrane. Functionally, probable cell surface protease. This is Neprilysin-11 (nep-11) from Caenorhabditis elegans.